The sequence spans 190 residues: Ribosome hibernation promotion factor (190 aa).

Belongs to the HPF/YfiA ribosome-associated protein family. Long HPF subfamily. As to quaternary structure, interacts with 100S ribosomes.

It is found in the cytoplasm. Functionally, required for dimerization of active 70S ribosomes into 100S ribosomes in stationary phase; 100S ribosomes are translationally inactive and sometimes present during exponential growth. The polypeptide is Ribosome hibernation promotion factor (Staphylococcus saprophyticus subsp. saprophyticus (strain ATCC 15305 / DSM 20229 / NCIMB 8711 / NCTC 7292 / S-41)).